Here is a 572-residue protein sequence, read N- to C-terminus: MRTSQYLLSTQKETPADAEVISHQLMLRAGMIRKLASGLYTWLPTGVRVLKKVENIVREEMNNAGAIEVSMPVVQPADLWQESGRWEQYGPELLRFVDRGERPFVLGPTHEEVITDLIRGEINSYKQLPLNFFQIQTKFRDEVRPRFGVMRAREFLMKDAYSFHTTQESLQETYDAMYTAYSKIFSRMDLNFRAVLADTGSIGGSASHEFQVLAESGEDDIVFSTGSDYAANIEFAEALAPTEPRAPATEELRIVDTPNAKTIAELVEQFKLPIEKTVKTLLVHAHEESGHKLVALLVRGDHDLNEIKAEKLPQVAKPLTFASEEEIRAAIGAGPGSLGPVNLSLPVIADRSVAVMSDFGAGANIDGKHYFGINWERDLALPLVADLRNVVEGDISPDGKGTLQIKRGIEVGHIFQLGTKYSEVMKATVQGEDGRNQVMTMGCYGIGVSRVVAAAIEQNHDDRGIIWPDAIAPFQVAILPMNMHKSFRVKELAEELYTTLRSHGIDVILDDRKERPGVMFADMELIGVPHNIVIGDRNLDSEEVEYKNRRVGEKQMIKTSEIVEFLLSQIKR.

It belongs to the class-II aminoacyl-tRNA synthetase family. ProS type 1 subfamily. As to quaternary structure, homodimer.

Its subcellular location is the cytoplasm. It carries out the reaction tRNA(Pro) + L-proline + ATP = L-prolyl-tRNA(Pro) + AMP + diphosphate. In terms of biological role, catalyzes the attachment of proline to tRNA(Pro) in a two-step reaction: proline is first activated by ATP to form Pro-AMP and then transferred to the acceptor end of tRNA(Pro). As ProRS can inadvertently accommodate and process non-cognate amino acids such as alanine and cysteine, to avoid such errors it has two additional distinct editing activities against alanine. One activity is designated as 'pretransfer' editing and involves the tRNA(Pro)-independent hydrolysis of activated Ala-AMP. The other activity is designated 'posttransfer' editing and involves deacylation of mischarged Ala-tRNA(Pro). The misacylated Cys-tRNA(Pro) is not edited by ProRS. This is Proline--tRNA ligase from Yersinia pestis (strain Pestoides F).